The sequence spans 426 residues: Adenylosuccinate synthetase (426 aa).

Residues 13-19 (GDEGKGK) and 41-43 (GHT) contribute to the GTP site. Catalysis depends on Asp-14, which acts as the Proton acceptor. Positions 14 and 41 each coordinate Mg(2+). Residues 14–17 (DEGK), 39–42 (NAGH), Thr-129, Arg-143, Gln-224, Thr-239, and Arg-303 each bind IMP. Residue His-42 is the Proton donor of the active site. 299-305 (TTTGRPR) contributes to the substrate binding site. GTP is bound by residues Arg-305, 331–333 (KLD), and 414–416 (GTG).

It belongs to the adenylosuccinate synthetase family. In terms of assembly, homodimer. Requires Mg(2+) as cofactor.

The protein resides in the cytoplasm. The enzyme catalyses IMP + L-aspartate + GTP = N(6)-(1,2-dicarboxyethyl)-AMP + GDP + phosphate + 2 H(+). The protein operates within purine metabolism; AMP biosynthesis via de novo pathway; AMP from IMP: step 1/2. In terms of biological role, plays an important role in the de novo pathway of purine nucleotide biosynthesis. Catalyzes the first committed step in the biosynthesis of AMP from IMP. In Caldicellulosiruptor bescii (strain ATCC BAA-1888 / DSM 6725 / KCTC 15123 / Z-1320) (Anaerocellum thermophilum), this protein is Adenylosuccinate synthetase.